A 311-amino-acid polypeptide reads, in one-letter code: Pyrimidine-specific ribonucleoside hydrolase RihA (311 aa).

The active site involves histidine 240.

Belongs to the IUNH family. RihA subfamily.

Hydrolyzes cytidine or uridine to ribose and cytosine or uracil, respectively. This is Pyrimidine-specific ribonucleoside hydrolase RihA from Klebsiella pneumoniae (strain 342).